The primary structure comprises 1192 residues: DNA topoisomerase 2 (1192 aa).

Residues N64, N95, and 142 to 149 (GTNGVGLK) each bind ATP. Positions 438, 539, and 541 each coordinate Mg(2+). The Topo IIA-type catalytic domain occupies 707-1174 (IPNFLDGMTR…PGASVWLEEI (468 aa)). The O-(5'-phospho-DNA)-tyrosine intermediate role is filled by Y800.

This sequence belongs to the type II topoisomerase family. It depends on Mg(2+) as a cofactor. The cofactor is Mn(2+). Ca(2+) is required as a cofactor.

The protein resides in the host cytoplasm. It catalyses the reaction ATP-dependent breakage, passage and rejoining of double-stranded DNA.. In terms of biological role, type II topoisomerase. Processively relaxes supercoiled DNA. Displays DNA-supercoiling activity only when associated with the viral histone-like protein. The protein is DNA topoisomerase 2 of African swine fever virus (isolate Tick/South Africa/Pretoriuskop Pr4/1996) (ASFV).